Here is a 545-residue protein sequence, read N- to C-terminus: Glucose-6-phosphate isomerase (545 aa).

Catalysis depends on E351, which acts as the Proton donor. Active-site residues include H382 and K510.

It belongs to the GPI family.

The protein resides in the cytoplasm. The enzyme catalyses alpha-D-glucose 6-phosphate = beta-D-fructose 6-phosphate. The protein operates within carbohydrate biosynthesis; gluconeogenesis. It functions in the pathway carbohydrate degradation; glycolysis; D-glyceraldehyde 3-phosphate and glycerone phosphate from D-glucose: step 2/4. Its function is as follows. Catalyzes the reversible isomerization of glucose-6-phosphate to fructose-6-phosphate. The protein is Glucose-6-phosphate isomerase of Shewanella woodyi (strain ATCC 51908 / MS32).